The sequence spans 346 residues: Phenylalanine--tRNA ligase alpha subunit (346 aa).

Mg(2+) is bound at residue Glu262.

It belongs to the class-II aminoacyl-tRNA synthetase family. Phe-tRNA synthetase alpha subunit type 1 subfamily. As to quaternary structure, tetramer of two alpha and two beta subunits. Mg(2+) serves as cofactor.

It localises to the cytoplasm. The enzyme catalyses tRNA(Phe) + L-phenylalanine + ATP = L-phenylalanyl-tRNA(Phe) + AMP + diphosphate + H(+). In Ehrlichia chaffeensis (strain ATCC CRL-10679 / Arkansas), this protein is Phenylalanine--tRNA ligase alpha subunit.